Reading from the N-terminus, the 252-residue chain is Hydroxyacylglutathione hydrolase (252 aa).

Residues H54, H56, D58, H59, H111, D128, and H166 each coordinate Zn(2+).

This sequence belongs to the metallo-beta-lactamase superfamily. Glyoxalase II family. In terms of assembly, monomer. Zn(2+) serves as cofactor.

It catalyses the reaction an S-(2-hydroxyacyl)glutathione + H2O = a 2-hydroxy carboxylate + glutathione + H(+). It functions in the pathway secondary metabolite metabolism; methylglyoxal degradation; (R)-lactate from methylglyoxal: step 2/2. Thiolesterase that catalyzes the hydrolysis of S-D-lactoyl-glutathione to form glutathione and D-lactic acid. This Photobacterium profundum (strain SS9) protein is Hydroxyacylglutathione hydrolase.